A 377-amino-acid chain; its full sequence is Alanine racemase (377 aa).

The active-site Proton acceptor; specific for D-alanine is the lysine 35. Lysine 35 carries the post-translational modification N6-(pyridoxal phosphate)lysine. Arginine 130 serves as a coordination point for substrate. Tyrosine 260 serves as the catalytic Proton acceptor; specific for L-alanine. A substrate-binding site is contributed by methionine 312.

This sequence belongs to the alanine racemase family. Pyridoxal 5'-phosphate serves as cofactor.

It catalyses the reaction L-alanine = D-alanine. It participates in amino-acid biosynthesis; D-alanine biosynthesis; D-alanine from L-alanine: step 1/1. In terms of biological role, catalyzes the interconversion of L-alanine and D-alanine. May also act on other amino acids. The sequence is that of Alanine racemase (alr) from Leptothrix cholodnii (strain ATCC 51168 / LMG 8142 / SP-6) (Leptothrix discophora (strain SP-6)).